The chain runs to 609 residues: UvrABC system protein C (609 aa).

The GIY-YIG domain maps to 16-94 (SSAGVYRMYD…IKQYMPKYNV (79 aa)). One can recognise a UVR domain in the interval 203–238 (QQVISTLVAKMEQAAQQQEYEQAARFRDQIMALRKV).

The protein belongs to the UvrC family. Interacts with UvrB in an incision complex.

Its subcellular location is the cytoplasm. Its function is as follows. The UvrABC repair system catalyzes the recognition and processing of DNA lesions. UvrC both incises the 5' and 3' sides of the lesion. The N-terminal half is responsible for the 3' incision and the C-terminal half is responsible for the 5' incision. The sequence is that of UvrABC system protein C from Shewanella putrefaciens (strain CN-32 / ATCC BAA-453).